Here is a 137-residue protein sequence, read N- to C-terminus: Cytochrome c2 (137 aa).

The signal sequence occupies residues 1-21 (MKISLTAATVAALVLAAPAFA). Residues C34, C37, H38, and M117 each contribute to the heme c site.

The protein belongs to the cytochrome c family. Binds 1 heme c group covalently per subunit.

Functionally, cytochrome c2 is found mainly in purple, non-sulfur, photosynthetic bacteria where it functions as the electron donor to the oxidized bacteriochlorophyll in the photophosphorylation pathway. However, it may also have a role in the respiratory chain and is found in some non-photosynthetic bacteria. The chain is Cytochrome c2 (cycA) from Rhodobacter capsulatus (strain ATCC BAA-309 / NBRC 16581 / SB1003).